The primary structure comprises 262 residues: Phosphate import ATP-binding protein PstB (262 aa).

Residues alanine 15 to isoleucine 257 form the ABC transporter domain. Position 47-54 (glycine 47–serine 54) interacts with ATP.

Belongs to the ABC transporter superfamily. Phosphate importer (TC 3.A.1.7) family. The complex is composed of two ATP-binding proteins (PstB), two transmembrane proteins (PstC and PstA) and a solute-binding protein (PstS).

Its subcellular location is the cell inner membrane. The catalysed reaction is phosphate(out) + ATP + H2O = ADP + 2 phosphate(in) + H(+). Part of the ABC transporter complex PstSACB involved in phosphate import. Responsible for energy coupling to the transport system. This is Phosphate import ATP-binding protein PstB from Wolinella succinogenes (strain ATCC 29543 / DSM 1740 / CCUG 13145 / JCM 31913 / LMG 7466 / NCTC 11488 / FDC 602W) (Vibrio succinogenes).